A 196-amino-acid polypeptide reads, in one-letter code: Bcl-2-like protein 11 (196 aa).

The interval Met-1 to Pro-68 is disordered. Residues Thr-34 to Asn-43 are compositionally biased toward polar residues. Ser-65 carries the phosphoserine; by MAPK modification. Phosphoserine is present on residues Ser-73, Ser-83, and Ser-90. A disordered region spans residues Ser-90–Ser-114. Residues Ile-146–Thr-160 carry the BH3 motif.

Belongs to the Bcl-2 family. In terms of assembly, forms heterodimers with a number of antiapoptotic Bcl-2 proteins, including MCL1, BCL2, BCL2L1 isoform Bcl-X(L), BCL2A1/BFL-1, and BCL2L2/BCLW. Does not heterodimerize with proapoptotic proteins such as BAD, BOK or BAK. Identified in a complex containing BCL2L11, DYNLL1 and BCL2L1 isoform Bcl-X(L); BH3 integrity is required for BCL2L1-binding. Interacts with YWHAZ. When phosphorylated, interacts with TRIM2; this interaction is associated with ubiquitination and degradation. Interacts (via BH3) with MCL1; this interaction may sequester BCL2L11 and prevent its pro-apoptotic activity. When phosphorylated, isoform BimEL interacts with USP27X; this interaction leads to BCL2L11 deubiquitination and stabilization. Interacts with GIMAP5. Interacts with BCL2L10/BCL-B. Post-translationally, phosphorylation at Ser-65 by MAPK1/MAPK3 leads interaction with TRIM2 and ubiquitination, followed by proteasomal degradation. Deubiquitination catalyzed by USP27X stabilizes the protein. In terms of processing, ubiquitination by TRIM2 following phosphorylation by MAPK1/MAPK3 leads to proteasomal degradation. Conversely, deubiquitination catalyzed by USP27X stabilizes the protein. Widely expressed.

Its subcellular location is the membrane. It is found in the mitochondrion. Induces apoptosis and anoikis. The polypeptide is Bcl-2-like protein 11 (Bcl2l11) (Rattus norvegicus (Rat)).